Consider the following 120-residue polypeptide: Protein TCL1B4 (120 aa).

This sequence belongs to the TCL1 family.

The sequence is that of Protein TCL1B4 (Tcl1b4) from Mus musculus (Mouse).